We begin with the raw amino-acid sequence, 241 residues long: Uridylate kinase (241 aa).

Residue 15–18 participates in ATP binding; sequence KLSG. Positions 23-28 are involved in allosteric activation by GTP; sequence GAEGFG. G57 contacts UMP. G58 and R62 together coordinate ATP. Residues D77 and 138-145 each bind UMP; that span reads TGNPFFTT. 3 residues coordinate ATP: T165, F171, and D174.

Belongs to the UMP kinase family. As to quaternary structure, homohexamer.

The protein localises to the cytoplasm. It carries out the reaction UMP + ATP = UDP + ADP. Its pathway is pyrimidine metabolism; CTP biosynthesis via de novo pathway; UDP from UMP (UMPK route): step 1/1. With respect to regulation, allosterically activated by GTP. Inhibited by UTP. Its function is as follows. Catalyzes the reversible phosphorylation of UMP to UDP. The chain is Uridylate kinase from Sodalis glossinidius (strain morsitans).